An 85-amino-acid polypeptide reads, in one-letter code: UPF0291 protein SPH_1589 (85 aa).

The interval 62–85 (TPEKLRQVQREKGLHGRSLDDPNS) is disordered.

Belongs to the UPF0291 family.

It localises to the cytoplasm. The chain is UPF0291 protein SPH_1589 from Streptococcus pneumoniae (strain Hungary19A-6).